A 789-amino-acid polypeptide reads, in one-letter code: Leucine-rich repeat and fibronectin type-III domain-containing protein 2 (789 aa).

Positions methionine 1–alanine 20 are cleaved as a signal peptide. In terms of domain architecture, LRRNT spans cysteine 21 to arginine 52. Residues cysteine 21 to methionine 534 are Extracellular-facing. Asparagine 29 is a glycosylation site (N-linked (GlcNAc...) asparagine). 7 LRR repeats span residues arginine 53–asparagine 74, glycine 77–aspartate 98, serine 101–glycine 122, asparagine 125–aspartate 146, threonine 150–arginine 171, asparagine 174–aspartate 195, and lysine 198–alanine 219. The region spanning asparagine 242 to proline 288 is the LRRCT domain. The Ig-like domain maps to proline 289–serine 375. Residues cysteine 310 and cysteine 359 are joined by a disulfide bond. N-linked (GlcNAc...) asparagine glycosylation is found at asparagine 332, asparagine 341, and asparagine 384. The tract at residues serine 383 to arginine 424 is disordered. A compositionally biased stretch (gly residues) spans arginine 407–glutamate 416. The Fibronectin type-III domain maps to proline 421 to aspartate 518. The chain crosses the membrane as a helical span at residues isoleucine 535–valine 555. At arginine 556 to valine 789 the chain is on the cytoplasmic side. 3 disordered regions span residues serine 577 to valine 602, serine 619 to aspartate 654, and glutamine 668 to proline 702. A compositionally biased stretch (pro residues) spans glutamine 583–proline 599. The span at serine 619–alanine 638 shows a compositional bias: low complexity. Residues arginine 641 to lysine 650 show a composition bias toward pro residues. Residues glutamate 786–valine 789 carry the PDZ-binding motif.

It belongs to the LRFN family. In terms of assembly, forms heteromeric complexes with LRFN1, LRFN3, LRFN4 and LRFN5. Can form homomeric complexes, but not across cell junctions. Directly interacts with 2 NMDA receptor subunits GRIN1 and GRIN2A. Interacts with DLG1, DLG2, DLG3 and DLG4. Glycosylated.

The protein resides in the membrane. It localises to the synapse. Its subcellular location is the postsynaptic cell membrane. In terms of biological role, promotes neurite outgrowth in hippocampal neurons. Enhances the cell surface expression of 2 NMDA receptor subunits GRIN1 and GRIN2A. May play a role in redistributing DLG4 to the cell periphery. The polypeptide is Leucine-rich repeat and fibronectin type-III domain-containing protein 2 (LRFN2) (Homo sapiens (Human)).